The chain runs to 899 residues: Conserved oligomeric Golgi complex subunit 3 (899 aa).

This sequence belongs to the COG3 family. Component of the conserved oligomeric Golgi complex which is composed of eight different subunits and is required for normal Golgi morphology and localization.

Its subcellular location is the golgi apparatus membrane. Its function is as follows. Involved in ER-Golgi transport. The sequence is that of Conserved oligomeric Golgi complex subunit 3 from Aedes aegypti (Yellowfever mosquito).